The sequence spans 371 residues: tRNA N6-adenosine threonylcarbamoyltransferase (371 aa).

Residues H110 and H114 each contribute to the Fe cation site. Substrate is bound by residues 132–136 (LVSGG), D165, G178, D182, and N289. Residue D317 participates in Fe cation binding.

Belongs to the KAE1 / TsaD family. Fe(2+) is required as a cofactor.

The protein localises to the cytoplasm. It carries out the reaction L-threonylcarbamoyladenylate + adenosine(37) in tRNA = N(6)-L-threonylcarbamoyladenosine(37) in tRNA + AMP + H(+). Required for the formation of a threonylcarbamoyl group on adenosine at position 37 (t(6)A37) in tRNAs that read codons beginning with adenine. Is involved in the transfer of the threonylcarbamoyl moiety of threonylcarbamoyl-AMP (TC-AMP) to the N6 group of A37, together with TsaE and TsaB. TsaD likely plays a direct catalytic role in this reaction. This is tRNA N6-adenosine threonylcarbamoyltransferase from Solidesulfovibrio magneticus (strain ATCC 700980 / DSM 13731 / RS-1) (Desulfovibrio magneticus).